We begin with the raw amino-acid sequence, 121 residues long: MYIYWILLGLAIATEITGTLSMKWASVSEGNGGFILMLVMISLSYIFLSFAVKKIALGVAYALWEGIGILFITLFSVLLFDESLSLMKIAGLTTLVAGIVLIKSGTRKARKPELEVNHGAV.

Transmembrane regions (helical) follow at residues 1-21 (MYIYWILLGLAIATEITGTLS), 32-52 (GGFILMLVMISLSYIFLSFAV), 55-75 (IALGVAYALWEGIGILFITLF), and 82-102 (ESLSLMKIAGLTTLVAGIVLI).

It belongs to the drug/metabolite transporter (DMT) superfamily. Small multidrug resistance (SMR) (TC 2.A.7.1) family. MdtJ subfamily. In terms of assembly, forms a complex with MdtI.

It is found in the cell inner membrane. Catalyzes the excretion of spermidine. In Escherichia coli O139:H28 (strain E24377A / ETEC), this protein is Spermidine export protein MdtJ.